We begin with the raw amino-acid sequence, 163 residues long: Nucleotide-binding protein Npun_R4736 (163 aa).

This sequence belongs to the YajQ family.

Its function is as follows. Nucleotide-binding protein. This Nostoc punctiforme (strain ATCC 29133 / PCC 73102) protein is Nucleotide-binding protein Npun_R4736.